A 99-amino-acid polypeptide reads, in one-letter code: Teretoxin Tsu6.4 (99 aa).

The N-terminal stretch at 1–21 (MRLLLILVLLTPVIVAFSVDE) is a signal peptide. Positions 22 to 53 (ELNNADGANAASFTADQEVRHKRNLFPAIARR) are excised as a propeptide.

In terms of processing, contains 3 disulfide bonds. Expressed by the venom duct.

It is found in the secreted. This chain is Teretoxin Tsu6.4, found in Terebra subulata (Chocolate spotted auger).